The primary structure comprises 156 residues: Small ribosomal subunit protein uS7 (156 aa).

It belongs to the universal ribosomal protein uS7 family. In terms of assembly, part of the 30S ribosomal subunit. Contacts proteins S9 and S11.

Its function is as follows. One of the primary rRNA binding proteins, it binds directly to 16S rRNA where it nucleates assembly of the head domain of the 30S subunit. Is located at the subunit interface close to the decoding center, probably blocks exit of the E-site tRNA. The chain is Small ribosomal subunit protein uS7 from Nitrosococcus oceani (strain ATCC 19707 / BCRC 17464 / JCM 30415 / NCIMB 11848 / C-107).